Consider the following 313-residue polypeptide: Mitochondrial uncoupling protein 4 (313 aa).

Solcar repeat units follow at residues 4–115 (KSFV…LKNK), 124–215 (LNLS…FKEG), and 224–309 (DGLG…VRKL). 6 consecutive transmembrane segments (helical) span residues 6 to 26 (FVEG…LDLI), 84 to 104 (AAAL…YSTT), 130 to 150 (IGAG…ADVA), 189 to 209 (RGSA…LASY), 230 to 250 (VVAS…VDVI), and 282 to 302 (YKGF…LFVT).

The protein belongs to the mitochondrial carrier (TC 2.A.29) family. Expressed in roots, leaves, stems and flowers.

The protein localises to the mitochondrion inner membrane. Functionally, PUMPS are mitochondrial transporter proteins that create proton leaks across the inner mitochondrial membrane, thus uncoupling oxidative phosphorylation. This leads to a decrease in the efficiency of oxidative phosphorylation and an increase in heat production. May be involved in protecting plant cells against oxidative stress damage. Recombinant PUMP4, reconstituted into liposomes, transports a wide range of dicarboxylic acids including malate, oxaloacetate and succinate as well as phosphate, sulfate and thiosulfate. However, it is unknown if these transports are of any biological significance in vivo. This Arabidopsis thaliana (Mouse-ear cress) protein is Mitochondrial uncoupling protein 4 (PUMP4).